A 342-amino-acid polypeptide reads, in one-letter code: Holliday junction branch migration complex subunit RuvB (342 aa).

Positions 1–179 (MTNILSPEKS…FGIPMRLNFY (179 aa)) are large ATPase domain (RuvB-L). ATP-binding positions include isoleucine 18, arginine 19, glycine 60, lysine 63, threonine 64, threonine 65, 126–128 (EDF), arginine 169, tyrosine 179, and arginine 216. Threonine 64 contacts Mg(2+). A small ATPAse domain (RuvB-S) region spans residues 180–250 (NTEELKKVLN…ISDFGLNRLE (71 aa)). Positions 253–342 (CIGLDSNDYR…HQFNIFNENE (90 aa)) are head domain (RuvB-H). Residues arginine 289, arginine 308, and arginine 313 each coordinate DNA.

This sequence belongs to the RuvB family. In terms of assembly, homohexamer. Forms an RuvA(8)-RuvB(12)-Holliday junction (HJ) complex. HJ DNA is sandwiched between 2 RuvA tetramers; dsDNA enters through RuvA and exits via RuvB. An RuvB hexamer assembles on each DNA strand where it exits the tetramer. Each RuvB hexamer is contacted by two RuvA subunits (via domain III) on 2 adjacent RuvB subunits; this complex drives branch migration. In the full resolvosome a probable DNA-RuvA(4)-RuvB(12)-RuvC(2) complex forms which resolves the HJ.

The protein resides in the cytoplasm. It catalyses the reaction ATP + H2O = ADP + phosphate + H(+). In terms of biological role, the RuvA-RuvB-RuvC complex processes Holliday junction (HJ) DNA during genetic recombination and DNA repair, while the RuvA-RuvB complex plays an important role in the rescue of blocked DNA replication forks via replication fork reversal (RFR). RuvA specifically binds to HJ cruciform DNA, conferring on it an open structure. The RuvB hexamer acts as an ATP-dependent pump, pulling dsDNA into and through the RuvAB complex. RuvB forms 2 homohexamers on either side of HJ DNA bound by 1 or 2 RuvA tetramers; 4 subunits per hexamer contact DNA at a time. Coordinated motions by a converter formed by DNA-disengaged RuvB subunits stimulates ATP hydrolysis and nucleotide exchange. Immobilization of the converter enables RuvB to convert the ATP-contained energy into a lever motion, pulling 2 nucleotides of DNA out of the RuvA tetramer per ATP hydrolyzed, thus driving DNA branch migration. The RuvB motors rotate together with the DNA substrate, which together with the progressing nucleotide cycle form the mechanistic basis for DNA recombination by continuous HJ branch migration. Branch migration allows RuvC to scan DNA until it finds its consensus sequence, where it cleaves and resolves cruciform DNA. This chain is Holliday junction branch migration complex subunit RuvB, found in Rickettsia africae (strain ESF-5).